A 358-amino-acid polypeptide reads, in one-letter code: DnaJ homolog subfamily B member 11 (358 aa).

The first 22 residues, 1 to 22, serve as a signal peptide directing secretion; it reads MAPQNLGTLCLLLLYLLGAAIA. The region spanning 25-90 is the J domain; it reads DFYKILGVPR…EKRKQYDTYG (66 aa). Threonine 188 bears the Phosphothreonine mark. N-linked (GlcNAc...) asparagine glycosylation is present at asparagine 261.

Part of a large chaperone multiprotein complex comprising DNAJB11, HSP90B1, HSPA5, HYOU, PDIA2, PDIA4, PDIA6, PPIB, SDF2L1, UGGT1 and very small amounts of ERP29, but not, or at very low levels, CALR nor CANX. Binds to denatured substrates in an ATP-independent manner. Interacts via the J domain with HSPA5 in an ATP-dependent manner. In terms of processing, contains high-mannose Endo H-sensitive carbohydrates. Post-translationally, cys-169, Cys-171, Cys-193 and Cys-196 form intramolecular disulfide bonds. The preferential partner for each Cys is not known. As to expression, pancreas.

It localises to the endoplasmic reticulum lumen. In terms of biological role, as a co-chaperone for HSPA5 it is required for proper folding, trafficking or degradation of proteins. Binds directly to both unfolded proteins that are substrates for ERAD and nascent unfolded peptide chains, but dissociates from the HSPA5-unfolded protein complex before folding is completed. May help recruiting HSPA5 and other chaperones to the substrate. Stimulates HSPA5 ATPase activity. It is necessary for maturation and correct trafficking of PKD1. This chain is DnaJ homolog subfamily B member 11 (DNAJB11), found in Canis lupus familiaris (Dog).